The chain runs to 232 residues: MLKLTDITWLYHHLPMRFSLTVERGEQVAILGPSGAGKSTLLNLIAGFLTPASGLLTIDDVDHTTTPPSRRPVSMLFQENNLFSHLTVAQNIGLGLNPGLKLNAAQQKKMHAIAHQMGIDNLMARLPGELSGGQRQRVALARCLVREQPILLLDEPFSALDPALRQEMLTLVSTSCQQQKMTLLMVSHSVEDAARIATRSVVVADGRIAWQGKTDELLSGKASASALLGIKG.

In terms of domain architecture, ABC transporter spans 2–230 (LKLTDITWLY…KASASALLGI (229 aa)). 32 to 39 (GPSGAGKS) serves as a coordination point for ATP.

This sequence belongs to the ABC transporter superfamily. Thiamine importer (TC 3.A.1.19.1) family. In terms of assembly, the complex is composed of two ATP-binding proteins (ThiQ), two transmembrane proteins (ThiP) and a solute-binding protein (ThiB).

Its subcellular location is the cell inner membrane. It carries out the reaction thiamine(out) + ATP + H2O = thiamine(in) + ADP + phosphate + H(+). Part of the ABC transporter complex ThiBPQ involved in thiamine import. Responsible for energy coupling to the transport system. The protein is Thiamine import ATP-binding protein ThiQ of Escherichia coli O6:K15:H31 (strain 536 / UPEC).